The primary structure comprises 294 residues: MRFVIVTGLSGAGKSQAIRSLEDLGYFCVDNLPPTLMGKFAEACYQTDGKIDKIALVIDIRGGEFFDDLFENLKYLKEQNYRYEILFLDASDKVLVKRYKESRRTHPLAPGGRLIQGIELERRRLNEVKYKANNIIDTSNMTQMQLREKIWRIYGDDEQIENRLIIDVLSFGFKYGIPVDADLVFDVRFLPNPYYIPELKQFSGDDKEIQDYVLGFKETKEFIAKLDDMLKFLIPNYIKEGKIQLVVAIGCTGGRHRSVTIANAIYDRLKEKGHKVSKEHRDINEDIKKGGRKL.

Residue 8 to 15 participates in ATP binding; sequence GLSGAGKS. Position 59–62 (59–62) interacts with GTP; sequence DIRG.

It belongs to the RapZ-like family.

Functionally, displays ATPase and GTPase activities. The chain is Nucleotide-binding protein NT01CX_1284 from Clostridium novyi (strain NT).